Consider the following 456-residue polypeptide: E3 ubiquitin-protein ligase PUB24 (456 aa).

A U-box domain is found at 9-83; the sequence is EIPNYFICPI…QHWCVENETR (75 aa).

Post-translationally, auto-ubiquitinated.

It catalyses the reaction S-ubiquitinyl-[E2 ubiquitin-conjugating enzyme]-L-cysteine + [acceptor protein]-L-lysine = [E2 ubiquitin-conjugating enzyme]-L-cysteine + N(6)-ubiquitinyl-[acceptor protein]-L-lysine.. It participates in protein modification; protein ubiquitination. Its function is as follows. E3 ubiquitin-protein ligase that acts as a negative regulator of the immunity triggered by the pathogen-associated molecular patterns (PAMPs), in association with PUB22 and PUB23. The sequence is that of E3 ubiquitin-protein ligase PUB24 (PUB24) from Arabidopsis thaliana (Mouse-ear cress).